Here is a 354-residue protein sequence, read N- to C-terminus: Protein RecA (354 aa).

67-74 (GPESSGKT) serves as a coordination point for ATP.

This sequence belongs to the RecA family.

It is found in the cytoplasm. In terms of biological role, can catalyze the hydrolysis of ATP in the presence of single-stranded DNA, the ATP-dependent uptake of single-stranded DNA by duplex DNA, and the ATP-dependent hybridization of homologous single-stranded DNAs. It interacts with LexA causing its activation and leading to its autocatalytic cleavage. The polypeptide is Protein RecA (Yersinia enterocolitica serotype O:8 / biotype 1B (strain NCTC 13174 / 8081)).